The sequence spans 207 residues: Urease accessory protein UreG (207 aa).

12-19 contacts GTP; the sequence is GPVGAGKT.

This sequence belongs to the SIMIBI class G3E GTPase family. UreG subfamily. In terms of assembly, homodimer. UreD, UreF and UreG form a complex that acts as a GTP-hydrolysis-dependent molecular chaperone, activating the urease apoprotein by helping to assemble the nickel containing metallocenter of UreC. The UreE protein probably delivers the nickel.

It is found in the cytoplasm. Facilitates the functional incorporation of the urease nickel metallocenter. This process requires GTP hydrolysis, probably effectuated by UreG. The protein is Urease accessory protein UreG of Cereibacter sphaeroides (strain ATCC 17025 / ATH 2.4.3) (Rhodobacter sphaeroides).